A 396-amino-acid polypeptide reads, in one-letter code: Cytochrome b (396 aa).

4 helical membrane passes run 37–57 (FGSLLSLCLILQIITGLILAM), 81–102 (WLMRNLHANGASMFFICIYAHI), 117–137 (WNVGVILFALTAATAFVGYVL), and 182–202 (FFTFHFILPFILAAMTMIHIM). Heme b contacts are provided by H87 and H101. Residues H186 and H200 each contribute to the heme b site. Residue H205 coordinates a ubiquinone. The next 4 helical transmembrane spans lie at 230–250 (FKDILGFVILLGILFMISLLA), 292–312 (LGGVVALAAAIMILLIIPFTH), 324–344 (LAQITFWILIADLALLTWLGG), and 351–371 (FILMTQIASTVYFMIFILVFP).

This sequence belongs to the cytochrome b family. In terms of assembly, the cytochrome bc1 complex contains 3 respiratory subunits (MT-CYB, CYC1 and UQCRFS1), 2 core proteins (UQCRC1 and UQCRC2) and probably 6 low-molecular weight proteins. Requires heme b as cofactor.

Its subcellular location is the mitochondrion inner membrane. In terms of biological role, component of the ubiquinol-cytochrome c reductase complex (complex III or cytochrome b-c1 complex) that is part of the mitochondrial respiratory chain. The b-c1 complex mediates electron transfer from ubiquinol to cytochrome c. Contributes to the generation of a proton gradient across the mitochondrial membrane that is then used for ATP synthesis. This chain is Cytochrome b (mt-cyb), found in Petromyzon marinus (Sea lamprey).